The chain runs to 1782 residues: A-kinase anchor protein 12 (1782 aa).

Disordered regions lie at residues 1–53, 71–169, 189–400, 421–886, 938–1089, 1105–1134, 1157–1274, and 1305–1355; these read MGAG…DPAT, QDEL…QAND, KTEK…APLA, VSTV…ELSE, EREV…LKKE, PFTQ…ESSE, AIPP…ADEK, and KGEG…HVNE. A lipid anchor (N-myristoyl glycine) is attached at G2. Residues S11, S19, S28, S75, and S96 each carry the phosphoserine modification. Residues 16–53 show a composition bias toward low complexity; sequence PEGSSTPAEPEPSGGGPSAEAAPDTTADPAIAASDPAT. Basic and acidic residues predominate over residues 108–125; sequence GQRDSEDVSKRDSDKEMA. Residues 145–154 show a composition bias toward low complexity; the sequence is IIEQIPSSES. S154 is modified (phosphoserine). Positions 157 to 168 are enriched in polar residues; that stretch reads EELTQPTESQAN. Phosphoserine occurs at positions 219, 248, 258, 280, 283, 286, 347, and 371. The span at 226 to 249 shows a compositional bias: basic and acidic residues; sequence ASKESEPKQSTEKPEETLKREQSH. Residues 266-557 are involved in PKC-binding; it reads KEEGEEKQEK…TQVPADSPDS (292 aa). Basic and acidic residues-rich tracts occupy residues 315–347 and 363–379; these read KPKE…EVAS and ESAH…KVEL. Residue Y374 is modified to Phosphotyrosine. Phosphoserine occurs at positions 381 and 392. Residues 423–435 are compositionally biased toward basic and acidic residues; it reads TVEERTEEQKTEV. Residues 446 to 456 show a composition bias toward acidic residues; sequence ELVEMDAEPQE. Residues 458–468 show a composition bias toward basic and acidic residues; sequence EPAKELVKLKE. Residues S483 and S505 each carry the phosphoserine modification. Residues 528–537 show a composition bias toward basic residues; the sequence is LSGKKQKGKR. Phosphoserine occurs at positions 554, 557, 598, 612, 627, and 629. The AKAP CaM-binding 1 signature appears at 607-627; it reads VTPWASFKKMVTPKKRVRRPS. The span at 625 to 639 shows a compositional bias: basic and acidic residues; that stretch reads RPSESDKEDELDKVK. The segment covering 640–652 has biased composition (low complexity); that stretch reads SATLSSTESTASE. T642 carries the post-translational modification Phosphothreonine. S644, S645, S648, and S651 each carry phosphoserine. The span at 655–674 shows a compositional bias: basic and acidic residues; the sequence is EEMKGSVEEPKPEEPKRKVD. A phosphoserine mark is found at S696, S697, and S698. The span at 708–724 shows a compositional bias: basic and acidic residues; that stretch reads GGDHQKADEAGKDKETG. The segment covering 739–749 has biased composition (polar residues); it reads QGSSSPEQAGS. A phosphoserine mark is found at S749, S761, and S787. Positions 756–776 match the AKAP CaM-binding 2 motif; that stretch reads VSTWESFKRLVTPRKKSKSKL. The span at 792–803 shows a compositional bias: basic and acidic residues; the sequence is STPDTEPGKEES. The AKAP CaM-binding 3 signature appears at 801–821; sequence EESWVSIKKFIPGRRKKRPDG. S806 carries the phosphoserine modification. Over residues 986 to 997 the composition is skewed to low complexity; sequence GAEEGTEASAAE. K1051 is covalently cross-linked (Glycyl lysine isopeptide (Lys-Gly) (interchain with G-Cter in SUMO1)). Over residues 1072 to 1089 the composition is skewed to basic and acidic residues; sequence AEAERPEEQAEASGLKKE. The segment covering 1164–1174 has biased composition (polar residues); sequence ETPTDSETDGS. Basic and acidic residues-rich tracts occupy residues 1187–1198 and 1231–1251; these read QKDEIVEIHEEN and EETK…KEVS. A compositionally biased stretch (polar residues) spans 1253–1267; that stretch reads ETVSILSKTEGTQEA. Residues S1328 and S1331 each carry the phosphoserine modification. Positions 1333 to 1355 are enriched in basic and acidic residues; that stretch reads VEREMVVQVEREKTEAEPTHVNE. Phosphoserine occurs at positions 1391 and 1395. The RII-binding stretch occupies residues 1541–1554; sequence ELETKSSKLVQNII. Residues 1584–1782 form a disordered region; the sequence is KADSQDAGQE…ESAKSELTES (199 aa). S1587 carries the phosphoserine modification. Residues 1603-1612 are compositionally biased toward polar residues; sequence ASAQDETPIT. Composition is skewed to basic and acidic residues over residues 1629–1639 and 1675–1699; these read DISKDMSEASE and VPED…KEDE. The residue at position 1727 (S1727) is a Phosphoserine. Basic and acidic residues-rich tracts occupy residues 1734 to 1757 and 1766 to 1782; these read KQKE…ESDK and ELQK…LTES.

As to quaternary structure, binds to dimeric RII-alpha regulatory subunit of PKC. As to expression, expressed in endothelial cells, cultured fibroblasts and osteosarcoma, but not in platelets, leukocytes, monocytic cell lines or peripherical blood cells.

It localises to the cytoplasm. It is found in the cell cortex. Its subcellular location is the cytoskeleton. The protein localises to the membrane. Functionally, anchoring protein that mediates the subcellular compartmentation of protein kinase A (PKA) and protein kinase C (PKC). The polypeptide is A-kinase anchor protein 12 (AKAP12) (Homo sapiens (Human)).